Consider the following 524-residue polypeptide: MHCTCVRQSDLPNTTRLFADVLYHPDKTADFYQYPLRNLEAYQAAAAAIDFTPERRAALIAALRVQNPESPALSRLAEPGTVAVVTGQQVGLFSGPSYTIYKVLHAVKLAKWLSDNGTPAVPLFWLATEDHDFAEVNHVWVFDSHHHPRKLEMRRTALEQPVGSVTLAAPPVPELRATLHGLPFGEEVADLVEETYRAGSTMGKSFAELLRRLLAQFDIPYVDPMLPAFRELAAPALRSAVEAAPDLTSQLLQRNRELSDAGYHSQVHVEDHTSLVFLLENGKRLNLRRAGNEYVHNSRRFTAAELMDRAASLSPNAILRPVIQDSMLPTVAYIGGPAEIAYFAQSQVLYRTLLGRMPIAAPRTGYTILDSRSAKLMNRYGLEVTDFFHGETPLKERLASRLVPPRLGDTVRATTATVESAVGRLRAELAAFDPTLAQALDRSARKINYQIEKMERKTAREAMRRDARAASDAESLCGLIYPERHLQERLYSILPFLAKHGLDLPARIYDSIELECTDHRVMVV.

The stretch at 437–457 (AQALDRSARKINYQIEKMERK) forms a coiled coil.

It belongs to the BshC family.

The sequence is that of Putative cysteine ligase BshC from Solibacter usitatus (strain Ellin6076).